Consider the following 272-residue polypeptide: Glucosyl-3-phosphoglycerate/mannosyl-3-phosphoglycerate phosphatase (272 aa).

The active-site Nucleophile is the D8. D8, D10, and D214 together coordinate Mg(2+).

Belongs to the HAD-like hydrolase superfamily. MPGP family. In terms of assembly, monomer. Requires Co(2+) as cofactor. It depends on Mg(2+) as a cofactor. Ni(2+) is required as a cofactor.

The enzyme catalyses (2R)-2-O-(alpha-D-glucopyranosyl)-3-phospho-glycerate + H2O = (2R)-2-O-(alpha-D-glucopyranosyl)-glycerate + phosphate. It catalyses the reaction 2-O-(alpha-D-mannosyl)-3-phosphoglycerate + H2O = (2R)-2-O-(alpha-D-mannosyl)-glycerate + phosphate. Functionally, involved in the biosynthesis of glucosylglycerate. Catalyzes the dephosphorylation of glucosyl-3-phosphoglycerate (GPG) and mannosyl-3-phosphoglycerate (MPG) to glucosylglycerate (GG) and mannosylglycerate (MG), respectively. The polypeptide is Glucosyl-3-phosphoglycerate/mannosyl-3-phosphoglycerate phosphatase (Methanococcoides burtonii (strain DSM 6242 / NBRC 107633 / OCM 468 / ACE-M)).